The following is a 273-amino-acid chain: Histone H1.2 (273 aa).

The disordered stretch occupies residues 1–63 (MSIEEENVPT…TKKKTTSSHP (63 aa)). N-acetylserine is present on Ser-2. Ser-14 bears the Phosphoserine mark. A compositionally biased stretch (basic residues) spans 33–59 (GKSKKTTTAKATKKPVKAAAPTKKKTT). Positions 61 to 130 (SHPTYEEMIK…KVKASFKIPS (70 aa)) constitute an H15 domain. Glycyl lysine isopeptide (Lys-Gly) (interchain with G-Cter in ubiquitin) cross-links involve residues Lys-156 and Lys-165. Low complexity-rich tracts occupy residues 193–216 (KVTAAKPKSKSVAAVSKTKAVAAK) and 237–256 (KKVAAPAKKVAVTKKAPAKS). The interval 193–273 (KVTAAKPKSK…KRASTRKAKK (81 aa)) is disordered. Positions 257 to 273 (VKVKSPAKRASTRKAKK) are enriched in basic residues.

It belongs to the histone H1/H5 family.

The protein localises to the nucleus. Its subcellular location is the chromosome. Histones H1 are necessary for the condensation of nucleosome chains into higher-order structures. In Arabidopsis thaliana (Mouse-ear cress), this protein is Histone H1.2.